The primary structure comprises 351 residues: Uroporphyrinogen decarboxylase (351 aa).

Substrate is bound by residues 25-29, D74, Y151, S206, and H325; that span reads RQAGR.

The protein belongs to the uroporphyrinogen decarboxylase family. In terms of assembly, homodimer.

The protein localises to the cytoplasm. The enzyme catalyses uroporphyrinogen III + 4 H(+) = coproporphyrinogen III + 4 CO2. Its pathway is porphyrin-containing compound metabolism; protoporphyrin-IX biosynthesis; coproporphyrinogen-III from 5-aminolevulinate: step 4/4. Its function is as follows. Catalyzes the decarboxylation of four acetate groups of uroporphyrinogen-III to yield coproporphyrinogen-III. This Chlorobium luteolum (strain DSM 273 / BCRC 81028 / 2530) (Pelodictyon luteolum) protein is Uroporphyrinogen decarboxylase.